A 370-amino-acid polypeptide reads, in one-letter code: Luciferin sulfotransferase (370 aa).

90 to 95 (KAGTTW) is a 3'-phosphoadenylyl sulfate binding site. Residue H165 is the Proton acceptor of the active site. 3'-phosphoadenylyl sulfate is bound by residues R189, S197, Y250, 284 to 289 (LSFESM), and 316 to 320 (FMRSG).

This sequence belongs to the sulfotransferase 1 family.

The enzyme catalyses firefly D-luciferin + 3'-phosphoadenylyl sulfate = firefly D-sulfoluciferin + adenosine 3',5'-bisphosphate + H(+). It carries out the reaction firefly L-luciferin + 3'-phosphoadenylyl sulfate = firefly L-sulfoluciferin + adenosine 3',5'-bisphosphate + H(+). Sulfoluciferin formation is inhibited by the product adenosine 3',5'-bisphosphate. In terms of biological role, catalyzes the production of firefly sulfoluciferin from luciferin using the sulfo-donor 3'-phosphoadenylyl sulfate (PAPS). Is also able to catalyze the reverse reaction, i.e. the adenosine 3',5'-bisphosphate-dependent desulfonation of sulfoluciferin. Can use either D- or L-luciferin stereoisomer as substrate. Sulfoluciferin, which is not a substrate of P.pyralis luciferase, likely serves as a luciferin storage form in fireflies. In Photinus pyralis (Common eastern firefly), this protein is Luciferin sulfotransferase.